Here is a 752-residue protein sequence, read N- to C-terminus: Multifunctional tryptophan biosynthesis protein (752 aa).

Residues 23–223 (NVILIDNYDS…LELTAGTWDN (201 aa)) form the Glutamine amidotransferase type-1 domain. 74 to 76 (GPG) contacts L-glutamine. Cys102 serves as the catalytic Nucleophile; for GATase activity. Residues Gln106 and 152 to 153 (SL) contribute to the L-glutamine site. Catalysis depends on for GATase activity residues His197 and Glu199. An indole-3-glycerol phosphate synthase region spans residues 239-503 (ILDKIYAHRK…DTSAFVAQLL (265 aa)). Residues 519–752 (LVKICGTRTE…FVKSAKSIRQ (234 aa)) are N-(5'-phosphoribosyl)anthranilate isomerase.

The enzyme catalyses N-(5-phospho-beta-D-ribosyl)anthranilate = 1-(2-carboxyphenylamino)-1-deoxy-D-ribulose 5-phosphate. It catalyses the reaction 1-(2-carboxyphenylamino)-1-deoxy-D-ribulose 5-phosphate + H(+) = (1S,2R)-1-C-(indol-3-yl)glycerol 3-phosphate + CO2 + H2O. It carries out the reaction chorismate + L-glutamine = anthranilate + pyruvate + L-glutamate + H(+). It participates in amino-acid biosynthesis; L-tryptophan biosynthesis; L-tryptophan from chorismate: step 1/5. It functions in the pathway amino-acid biosynthesis; L-tryptophan biosynthesis; L-tryptophan from chorismate: step 3/5. Its pathway is amino-acid biosynthesis; L-tryptophan biosynthesis; L-tryptophan from chorismate: step 4/5. Its function is as follows. Trifunctional enzyme bearing the Gln amidotransferase (GATase) domain of anthranilate synthase, indole-glycerolphosphate synthase, and phosphoribosylanthranilate isomerase activities. The chain is Multifunctional tryptophan biosynthesis protein (trpC) from Penicillium chrysogenum (Penicillium notatum).